The following is a 442-amino-acid chain: Asparagine--tRNA ligase (442 aa).

This sequence belongs to the class-II aminoacyl-tRNA synthetase family. As to quaternary structure, homodimer.

It is found in the cytoplasm. It catalyses the reaction tRNA(Asn) + L-asparagine + ATP = L-asparaginyl-tRNA(Asn) + AMP + diphosphate + H(+). The polypeptide is Asparagine--tRNA ligase (Koribacter versatilis (strain Ellin345)).